The sequence spans 465 residues: Pancreatic triacylglycerol lipase (465 aa).

The N-terminal stretch at 1–16 (MLLVWSLALLLGAVAG) is a signal peptide. 2 disulfide bridges follow: Cys20–Cys26 and Cys107–Cys118. The active-site Nucleophile is the Ser169. The Charge relay system role is filled by Asp193. 4 residues coordinate Ca(2+): Glu204, Arg207, Asp209, and Asp212. A disulfide bridge links Cys254 with Cys278. His280 acts as the Charge relay system in catalysis. Disulfide bonds link Cys302–Cys313, Cys316–Cys321, and Cys449–Cys465. The 111-residue stretch at 355-465 (WRYKVSVTLS…EDVLLTLNAC (111 aa)) folds into the PLAT domain.

This sequence belongs to the AB hydrolase superfamily. Lipase family. As to quaternary structure, forms a 1:1 stoichiometric complex with (pro)colipase/CLPS. As to expression, expressed in many tissues with highest expression in liver. During hibernation there is a significant increases in expression in heart, white adipose tissue (WAT), and testis; but not in pancreas.

Its subcellular location is the secreted. It catalyses the reaction a triacylglycerol + H2O = a diacylglycerol + a fatty acid + H(+). The enzyme catalyses 1,2,3-tributanoylglycerol + H2O = dibutanoylglycerol + butanoate + H(+). It carries out the reaction 1,2,3-tri-(9Z-octadecenoyl)-glycerol + H2O = di-(9Z)-octadecenoylglycerol + (9Z)-octadecenoate + H(+). The catalysed reaction is all-trans-retinyl hexadecanoate + H2O = all-trans-retinol + hexadecanoate + H(+). It catalyses the reaction 1,2-di-(9Z-octadecenoyl)-glycerol + H2O = (9Z-octadecenoyl)-glycerol + (9Z)-octadecenoate + H(+). Inhibited by bile salts, is reactivated by (pro)colipase/CLPS. Its function is as follows. Plays an important role in fat metabolism. It preferentially splits the esters of long-chain fatty acids at positions 1 and 3, producing mainly 2-monoacylglycerol and free fatty acids, and shows considerably higher activity against insoluble emulsified substrates than against soluble ones. Plays a role in hibernation as a key enzyme that shows high activity at low temperatures. When expressed in the hibernating heart it liberates fatty acids from triglycerides at temperatures as low as 0 degrees Celsius. The chain is Pancreatic triacylglycerol lipase (PNLIP) from Ictidomys tridecemlineatus (Thirteen-lined ground squirrel).